We begin with the raw amino-acid sequence, 289 residues long: F-actin-capping protein subunit beta (289 aa).

Residues R73 to M110 are disordered. Gly residues predominate over residues G87–A106.

It belongs to the F-actin-capping protein beta subunit family. As to quaternary structure, component of the F-actin capping complex, composed of a heterodimer of an alpha and a beta subunit.

The protein resides in the cytoplasm. The protein localises to the cytoskeleton. Its subcellular location is the actin patch. In terms of biological role, F-actin-capping proteins bind in a Ca(2+)-independent manner to the fast growing ends of actin filaments (barbed end) thereby blocking the exchange of subunits at these ends. Unlike other capping proteins (such as gelsolin and severin), these proteins do not sever actin filaments. The chain is F-actin-capping protein subunit beta (fac-2) from Neurospora crassa (strain ATCC 24698 / 74-OR23-1A / CBS 708.71 / DSM 1257 / FGSC 987).